Reading from the N-terminus, the 402-residue chain is MDRTETRFRKRGQITGKITTSRQLHPQNEQSPQRSTSGYPLQEVVDDEVLGPSAPGVDPSPPCRSLGWKRKKEWSDESEEEPEKELAPEPEETWVVETLCGLKMKLKQQRVSPILPEHHKDFNSQLAPGVDPSPPHRSFCWKRKREWWDESEESLEEEPRKVLAPEPEEIWVAEMLCGLKMKLKRRRVLLVLPEHHEAFNRLLEDPVIKRFLAWDKDLRVSDKYLLAMVIVYFSRAGLPSWQYQRIHFFLALYLANDMEEDDEDSKQNIFHFLYGKTRSRIPLLRKRWFQLGRSMNPRARKNRSRIPLLRKRRFQLGRSMNPRARKYRSRIPLVRKRRFQLRRCMNPRARKNRSQIVLFQKLRFQFFCSMSGRAWVSPEELEEIQAYDPEHWVWARDRAHLS.

Residues 1–90 (MDRTETRFRK…EPEKELAPEP (90 aa)) form a disordered region. Residues 16 to 39 (GKITTSRQLHPQNEQSPQRSTSGY) show a composition bias toward polar residues. Residues 76–90 (DESEEEPEKELAPEP) are compositionally biased toward acidic residues.

The protein belongs to the Speedy/Ringo family.

This is Speedy protein E21 from Homo sapiens (Human).